The following is a 417-amino-acid chain: MRSLLLGTLCLLAVALAAEVKKPLEAAAPGTAEKLSSKATTLAERSTGLAFSLYQAMAKDQAVENILLSPLVVASSLGLVSLGGKATTASQAKAVLSAEKLRDEEVHTGLGELLRSLSNSTARNVTWKLGSRLYGPSSVSFADDFVRSSKQHYNCEHSKINFRDKRSALQSINEWASQTTDGKLPEVTKDVERTDGALLVNAMFFKPHWDEKFHHKMVDNRGFMVTRSYTVGVTMMHRTGLYNYYDDEKEKLQMVEMPLAHKLSSLIILMPHHVEPLERLEKLLTKEQLKAWMGKMQKKAVAISLPKGVVEVTHDLQKHLAGLGLTEAIDKNKADLSRMSGKKDLYLASVFHATAFEWDTEGNPFDQDIYGREELRSPKLFYADHPFIFLVRDNQSGSLLFIGRLVRPKGDKMRDEL.

A signal peptide spans 1–17 (MRSLLLGTLCLLAVALA). Residue Lys-93 is modified to N6-succinyllysine. Asn-119 and Asn-124 each carry an N-linked (GlcNAc...) asparagine glycan. Residue Ser-140 is modified to Phosphoserine. Lys-206 bears the N6-acetyllysine mark. N6-succinyllysine is present on Lys-295. Position 318 is an N6-acetyllysine (Lys-318). Asn-394 is a glycosylation site (N-linked (GlcNAc...) asparagine). A Prevents secretion from ER motif is present at residues 414–417 (RDEL).

It belongs to the serpin family.

It is found in the endoplasmic reticulum lumen. Functionally, binds specifically to collagen. Could be involved as a chaperone in the biosynthetic pathway of collagen. This Mus musculus (Mouse) protein is Serpin H1 (Serpinh1).